A 144-amino-acid polypeptide reads, in one-letter code: Bradykinin-potentiating and C-type natriuretic peptides isoform 2 (144 aa).

An N-terminal signal peptide occupies residues 1–23 (MVLSRLAASGLLLLALLALSVDG). A propeptide spanning residues 24–30 (KPVQQWA) is cleaved from the precursor. Gln31 carries the pyrrolidone carboxylic acid modification. The propeptide occupies 41 to 47 (LLVQQWA). The residue at position 48 (Gln48) is a Pyrrolidone carboxylic acid. Positions 61 to 67 (LTVQQWA) are excised as a propeptide. At Gln68 the chain carries Pyrrolidone carboxylic acid. Positions 78-84 (LTVQQWA) are excised as a propeptide. Residues 81-110 (QQWAQGRPPGPPIPPLTVQQWAQARPPHPP) form a disordered region. Residue Gln85 is modified to Pyrrolidone carboxylic acid. Positions 96-102 (LTVQQWA) are excised as a propeptide. Residue Gln103 is modified to Pyrrolidone carboxylic acid. Residues 114–116 (APL) constitute a propeptide that is removed on maturation. Gln117 carries the post-translational modification Pyrrolidone carboxylic acid. Val122 is a propeptide. Gln123 carries the pyrrolidone carboxylic acid modification. Residues 128 to 144 (VQKWAPVQKWAPLLQPT) constitute a propeptide that is removed on maturation.

The protein in the N-terminal section; belongs to the bradykinin-potentiating peptide family. In terms of tissue distribution, expressed by venom gland.

It is found in the secreted. The protein resides in the cytoplasm. Its subcellular location is the cytosol. Its function is as follows. Peptide with several activities. It inhibits the activity of the angiotensin-converting enzyme (ACE) by a preferential interaction with its C-domain. It evokes transient hypotension (-14 mmHg) similar to that evoked by 0.5 ug of bradykinin, when injected alone into rats. It has a high bradykinin-potentiating effect (120%), when 60 nmol of BPP-10c are coinjected with 0.5 ug of bradykinin into rats. Does not affect angiotensin-1 pressor effects. Shows potent and long-lasting antihypertensive activity as well as a reduction of the heart rate. It also binds and dose-dependently promotes the activation of cytosolic argininosuccinate synthase (ASS1), an enzyme that catalyzes the conversion of citrulline, L-aspartate and ATP to argininosuccinate, AMP and pyrophosphate. It also enhances ASS1-dependent arginine production in HEK 293 cells, as well as in spontaneous hypertensive rat (SHR) and Wistar rat plasma. In addition, it induces the production of nitric-oxide (NO) by HUVEC cells via the endothelial nitric-oxide synthase (NOS3), which use arginine as a substrate and produce NO. It has been shown to be internalized by ASS1-expressing endothelial (HUVEC) and kidney (HEK 293) cells, and is detected homogenously distributed within the cell cytoplasm for up to 2 hours. Functionally, acts as indirect hypotensive agent. Increases leukocyte rolling flux and adhesion by five-fold in post-capillary venules, without any increments in vasodilation of arterioles. In terms of biological role, acts as indirect hypotensive agent. Potently induces vasodilation of arterioles, with only a small increase in leukocyte rolling flux. In Bothrops jararacussu (Jararacussu), this protein is Bradykinin-potentiating and C-type natriuretic peptides isoform 2.